Reading from the N-terminus, the 350-residue chain is Biotin synthase (350 aa).

Residues 38–256 (NYVQVSTLLS…IAIARIMMPQ (219 aa)) enclose the Radical SAM core domain. [4Fe-4S] cluster-binding residues include Cys53, Cys57, and Cys60. Residues Cys97, Cys128, Cys188, and Arg260 each contribute to the [2Fe-2S] cluster site.

The protein belongs to the radical SAM superfamily. Biotin synthase family. Homodimer. Requires [4Fe-4S] cluster as cofactor. [2Fe-2S] cluster serves as cofactor.

It carries out the reaction (4R,5S)-dethiobiotin + (sulfur carrier)-SH + 2 reduced [2Fe-2S]-[ferredoxin] + 2 S-adenosyl-L-methionine = (sulfur carrier)-H + biotin + 2 5'-deoxyadenosine + 2 L-methionine + 2 oxidized [2Fe-2S]-[ferredoxin]. Its pathway is cofactor biosynthesis; biotin biosynthesis; biotin from 7,8-diaminononanoate: step 2/2. Functionally, catalyzes the conversion of dethiobiotin (DTB) to biotin by the insertion of a sulfur atom into dethiobiotin via a radical-based mechanism. In Vibrio campbellii (strain ATCC BAA-1116), this protein is Biotin synthase.